The sequence spans 179 residues: Large ribosomal subunit protein uL5 (179 aa).

This sequence belongs to the universal ribosomal protein uL5 family. As to quaternary structure, part of the 50S ribosomal subunit; part of the 5S rRNA/L5/L18/L25 subcomplex. Contacts the 5S rRNA and the P site tRNA. Forms a bridge to the 30S subunit in the 70S ribosome.

This is one of the proteins that bind and probably mediate the attachment of the 5S RNA into the large ribosomal subunit, where it forms part of the central protuberance. In the 70S ribosome it contacts protein S13 of the 30S subunit (bridge B1b), connecting the 2 subunits; this bridge is implicated in subunit movement. Contacts the P site tRNA; the 5S rRNA and some of its associated proteins might help stabilize positioning of ribosome-bound tRNAs. This chain is Large ribosomal subunit protein uL5, found in Edwardsiella ictaluri (strain 93-146).